The sequence spans 299 residues: MAEFPASLLILNGKSTDNLPLREAIMLLREEGMTIHVRVTWEKGDAARFVEEARKLGVATVIAGGGDGTINEVSTALIQCEGDDIPALGILPLGTANDFATSVGIPEALDKALKLAIAGNAIAIDMAQVNKQTCFINMATGGFGTRITTETPEKLKAALGGVSYIIHGLMRMDTLQPDRCEIRGENFHWQGDALVIGIGNGRQAGGGQQLCPNALINDGLLQLRIFTGDEILPALVSTLKSDEDNPNIIEGASSWFDIQAPHEITFNLDGEPLSGQNFHIEILPAALRCRLPPDCPLLR.

The DAGKc domain maps to 2 to 133 (AEFPASLLIL…IDMAQVNKQT (132 aa)). ATP contacts are provided by residues threonine 40, 66 to 72 (GDGTINE), and threonine 95. The Mg(2+) site is built by leucine 215, aspartate 218, and leucine 220. Glutamate 271 functions as the Proton acceptor in the catalytic mechanism.

It belongs to the diacylglycerol/lipid kinase family. YegS lipid kinase subfamily. It depends on Mg(2+) as a cofactor. Ca(2+) is required as a cofactor.

Its subcellular location is the cytoplasm. Functionally, probably phosphorylates lipids; the in vivo substrate is unknown. The sequence is that of Probable lipid kinase YegS from Shigella boydii serotype 18 (strain CDC 3083-94 / BS512).